The chain runs to 166 residues: Endoribonuclease YbeY (166 aa).

Zn(2+) is bound by residues His-132, His-136, and His-142.

It belongs to the endoribonuclease YbeY family. Zn(2+) serves as cofactor.

It localises to the cytoplasm. Its function is as follows. Single strand-specific metallo-endoribonuclease involved in late-stage 70S ribosome quality control and in maturation of the 3' terminus of the 16S rRNA. The sequence is that of Endoribonuclease YbeY from Clostridium botulinum (strain Langeland / NCTC 10281 / Type F).